Here is a 486-residue protein sequence, read N- to C-terminus: Sensor protein PhoQ (486 aa).

Over 1–16 the chain is Cytoplasmic; the sequence is MKKLLHLFFPLSLRVR. The helical transmembrane segment at 17-37 threads the bilayer; the sequence is FLLATAAVVLVLSLAYGMVAL. Residues 38 to 194 lie on the Periplasmic side of the membrane; the sequence is IGYSVSFDKT…LKSSYMVWSW (157 aa). Positions 151 and 152 each coordinate a divalent metal cation. The chain crosses the membrane as a helical span at residues 195–215; it reads FIYVLSANLLLVIPLLWVAAW. The HAMP domain maps to 215–266; it reads WWSLRPIEALAKEVRELEEHNRELLNPATTRELTSLVRNLNRLLKSERERYD. Residues 216 to 486 lie on the Cytoplasmic side of the membrane; that stretch reads WSLRPIEALA…GRQHSAPKDE (271 aa). The region spanning 274–480 is the Histidine kinase domain; that stretch reads DLTHSLKTPL…RMEVIFGRQH (207 aa). The residue at position 277 (histidine 277) is a Phosphohistidine; by autocatalysis. Asparagine 385 is a binding site for Mg(2+). Residues 385–393, 415–420, and 434–446 contribute to the ATP site; these read NVLDNACKY, DDGPGI, and RVDTLRPGQGVGL. Mg(2+) is bound at residue glutamine 442.

In terms of assembly, homodimer.

It is found in the cell inner membrane. The enzyme catalyses ATP + protein L-histidine = ADP + protein N-phospho-L-histidine.. Member of the two-component regulatory system PhoP/PhoQ involved in virulence, adaptation to low Mg(2+) environments and the control of acid resistance genes. In low periplasmic Mg(2+), PhoQ functions as a membrane-associated protein kinase that undergoes autophosphorylation and subsequently transfers the phosphate to PhoP, resulting in the expression of PhoP-activated genes (PAG) and repression of PhoP-repressed genes (PRG). In high periplasmic Mg(2+), acts as a protein phosphatase that dephosphorylates phospho-PhoP, which results in the repression of PG and may lead to expression of some PRG. This chain is Sensor protein PhoQ (phoQ), found in Escherichia coli O6:H1 (strain CFT073 / ATCC 700928 / UPEC).